Reading from the N-terminus, the 968-residue chain is RNA polymerase-associated protein RapA (968 aa).

The Helicase ATP-binding domain maps to 164–334; that stretch reads DVGRRHAPRV…FARLRLLDPN (171 aa). 177–184 provides a ligand contact to ATP; that stretch reads DEVGLGKT. A DEAH box motif is present at residues 280 to 283; the sequence is DEAH. A Helicase C-terminal domain is found at 490–644; sequence RVEWLMGYLT…TCPTGRAIYD (155 aa).

The protein belongs to the SNF2/RAD54 helicase family. RapA subfamily. Interacts with the RNAP. Has a higher affinity for the core RNAP than for the holoenzyme. Its ATPase activity is stimulated by binding to RNAP.

In terms of biological role, transcription regulator that activates transcription by stimulating RNA polymerase (RNAP) recycling in case of stress conditions such as supercoiled DNA or high salt concentrations. Probably acts by releasing the RNAP, when it is trapped or immobilized on tightly supercoiled DNA. Does not activate transcription on linear DNA. Probably not involved in DNA repair. The sequence is that of RNA polymerase-associated protein RapA from Salmonella arizonae (strain ATCC BAA-731 / CDC346-86 / RSK2980).